The chain runs to 462 residues: Tryptophan dimethylallyltransferase ifgA (462 aa).

Residues 83–84 (IL) and Glu92 each bind L-tryptophan. Arg103, Lys189, and Tyr191 together coordinate substrate. L-tryptophan-binding residues include Tyr193 and Arg246. Substrate-binding residues include Arg259, Lys261, Tyr263, Gln345, and Tyr347.

This sequence belongs to the tryptophan dimethylallyltransferase family. As to quaternary structure, homodimer.

The enzyme catalyses L-tryptophan + dimethylallyl diphosphate = 4-(3-methylbut-2-enyl)-L-tryptophan + diphosphate. The protein operates within alkaloid biosynthesis; ergot alkaloid biosynthesis. Tryptophan dimethylallyltransferase; part of the gene cluster that mediates the biosynthesis of isofumigaclavines, fungal ergot alkaloids. The tryptophan dimethylallyltransferase ifgA catalyzes the first step of ergot alkaloid biosynthesis by condensing dimethylallyl diphosphate (DMAP) and tryptophan to form 4-dimethylallyl-L-tryptophan. The second step is catalyzed by the methyltransferase ifgB that methylates 4-dimethylallyl-L-tryptophan in the presence of S-adenosyl-L-methionine, resulting in the formation of N-methyl-dimethylallyl-L-tryptophan. The catalase ifgD and the FAD-dependent oxidoreductase ifgC then transform N-methyl-dimethylallyl-L-tryptophan to chanoclavine-I which is further oxidized by ifgE in the presence of NAD(+), resulting in the formation of chanoclavine-I aldehyde. The chanoclavine-I aldehyde reductases ifgG and/or fgaOx3 reduce chanoclavine-I aldehyde to dihydrochanoclavine-I aldehyde that spontaneously dehydrates to form 6,8-dimethyl-6,7-didehydroergoline. The festuclavine dehydrogenases ifgF1 and/or ifgF2 then catalyze the reduction of 6,8-dimethyl-6,7-didehydroergoline to form festuclavine. Hydrolysis of festuclavine by a yet undetermined cytochrome P450 monooxygenase (called ifgH) then leads to the formation of isofumigaclavine B which is in turn acetylated by ifgI to isofumigaclavine A. Penicillium roqueforti has interestingly at least two sets of genes for the consumption of chanoclavine-I aldehyde on three different loci, the OYEs ifgG/fgaOx3 and the festuclavine synthase homologs ifgF1/ifgF2. The reason for the duplication of these genes is unclear, probably to ensure the conversion of chanoclavine-I aldehyde by differential gene expression under various environmental conditions. The polypeptide is Tryptophan dimethylallyltransferase ifgA (Penicillium roqueforti (strain FM164)).